The chain runs to 455 residues: ATP-dependent protease ATPase subunit HslU (455 aa).

ATP-binding positions include I19 and 61-66; that span reads GVGKTE. The disordered stretch occupies residues 144-163; it reads ESKVGFANEPAEDAASKKEK. Residues D268, E333, and R405 each contribute to the ATP site.

It belongs to the ClpX chaperone family. HslU subfamily. As to quaternary structure, a double ring-shaped homohexamer of HslV is capped on each side by a ring-shaped HslU homohexamer. The assembly of the HslU/HslV complex is dependent on binding of ATP.

It is found in the cytoplasm. Functionally, ATPase subunit of a proteasome-like degradation complex; this subunit has chaperone activity. The binding of ATP and its subsequent hydrolysis by HslU are essential for unfolding of protein substrates subsequently hydrolyzed by HslV. HslU recognizes the N-terminal part of its protein substrates and unfolds these before they are guided to HslV for hydrolysis. This chain is ATP-dependent protease ATPase subunit HslU, found in Francisella tularensis subsp. holarctica (strain FTNF002-00 / FTA).